Consider the following 293-residue polypeptide: tRNA pseudouridine synthase A (293 aa).

Asp67 functions as the Nucleophile in the catalytic mechanism. Tyr125 contributes to the substrate binding site.

The protein belongs to the tRNA pseudouridine synthase TruA family. In terms of assembly, homodimer.

The catalysed reaction is uridine(38/39/40) in tRNA = pseudouridine(38/39/40) in tRNA. In terms of biological role, formation of pseudouridine at positions 38, 39 and 40 in the anticodon stem and loop of transfer RNAs. The polypeptide is tRNA pseudouridine synthase A (Synechococcus sp. (strain CC9605)).